Consider the following 757-residue polypeptide: Protein transport protein SEC23-2 (757 aa).

Zn(2+) is bound by residues C56, C61, C80, and C83.

This sequence belongs to the SEC23/SEC24 family. SEC23 subfamily. As to quaternary structure, the COPII coat is composed of at least 5 proteins: the SEC23/24 complex, the SEC13/31 complex, and the protein SAR1.

The protein resides in the cytoplasm. The protein localises to the cytoplasmic vesicle. Its subcellular location is the COPII-coated vesicle membrane. It is found in the endoplasmic reticulum membrane. It localises to the golgi apparatus membrane. Functionally, component of the coat protein complex II (COPII) which promotes the formation of transport vesicles from the endoplasmic reticulum (ER). The coat has two main functions, the physical deformation of the endoplasmic reticulum membrane into vesicles and the selection of cargo molecules. The polypeptide is Protein transport protein SEC23-2 (SEC232) (Candida glabrata (strain ATCC 2001 / BCRC 20586 / JCM 3761 / NBRC 0622 / NRRL Y-65 / CBS 138) (Yeast)).